The primary structure comprises 202 residues: Holliday junction branch migration complex subunit RuvA (202 aa).

The interval 1–65 is domain I; sequence MIAYVEGRLA…EDALELYGFA (65 aa). Residues 66 to 144 are domain II; the sequence is TWDERQTFIV…VEDLPAAAPL (79 aa). Residues 145-155 form a flexible linker region; it reads VTGGAPGGVFR. The interval 155–202 is domain III; that stretch reads RDALAGLANLGYGEEEASHVLKEVLHGEPDLDVGGALRAALRALARGR.

The protein belongs to the RuvA family. In terms of assembly, homotetramer. Forms an RuvA(8)-RuvB(12)-Holliday junction (HJ) complex. HJ DNA is sandwiched between 2 RuvA tetramers; dsDNA enters through RuvA and exits via RuvB. An RuvB hexamer assembles on each DNA strand where it exits the tetramer. Each RuvB hexamer is contacted by two RuvA subunits (via domain III) on 2 adjacent RuvB subunits; this complex drives branch migration. In the full resolvosome a probable DNA-RuvA(4)-RuvB(12)-RuvC(2) complex forms which resolves the HJ.

It is found in the cytoplasm. Its function is as follows. The RuvA-RuvB-RuvC complex processes Holliday junction (HJ) DNA during genetic recombination and DNA repair, while the RuvA-RuvB complex plays an important role in the rescue of blocked DNA replication forks via replication fork reversal (RFR). RuvA specifically binds to HJ cruciform DNA, conferring on it an open structure. The RuvB hexamer acts as an ATP-dependent pump, pulling dsDNA into and through the RuvAB complex. HJ branch migration allows RuvC to scan DNA until it finds its consensus sequence, where it cleaves and resolves the cruciform DNA. This Nitratidesulfovibrio vulgaris (strain DP4) (Desulfovibrio vulgaris) protein is Holliday junction branch migration complex subunit RuvA.